The sequence spans 439 residues: UDP-N-acetylglucosamine--N-acetylmuramyl-(pentapeptide) pyrophosphoryl-undecaprenol N-acetylglucosamine transferase (439 aa).

UDP-N-acetyl-alpha-D-glucosamine is bound by residues 25-27, Arg218, Ser248, and Gln362; that span reads TGG.

The protein belongs to the glycosyltransferase 28 family. MurG subfamily.

The protein localises to the cell membrane. The enzyme catalyses di-trans,octa-cis-undecaprenyl diphospho-N-acetyl-alpha-D-muramoyl-L-alanyl-D-glutamyl-meso-2,6-diaminopimeloyl-D-alanyl-D-alanine + UDP-N-acetyl-alpha-D-glucosamine = di-trans,octa-cis-undecaprenyl diphospho-[N-acetyl-alpha-D-glucosaminyl-(1-&gt;4)]-N-acetyl-alpha-D-muramoyl-L-alanyl-D-glutamyl-meso-2,6-diaminopimeloyl-D-alanyl-D-alanine + UDP + H(+). It participates in cell wall biogenesis; peptidoglycan biosynthesis. Its function is as follows. Cell wall formation. Catalyzes the transfer of a GlcNAc subunit on undecaprenyl-pyrophosphoryl-MurNAc-pentapeptide (lipid intermediate I) to form undecaprenyl-pyrophosphoryl-MurNAc-(pentapeptide)GlcNAc (lipid intermediate II). This Roseiflexus sp. (strain RS-1) protein is UDP-N-acetylglucosamine--N-acetylmuramyl-(pentapeptide) pyrophosphoryl-undecaprenol N-acetylglucosamine transferase.